Reading from the N-terminus, the 288-residue chain is MKMKAYAKINIALDAIGKREDNYHLLRMIMQTVDLYDVIDIEKSNDSNISISCNKHYVPTDERNLGYKAAVLFRDEFNIKNGVKISIKKNIPVAAGMAGGSTNAAAVLVIMNKLFNVNASLEVLKEIGLKIGADVPYCIEGGTALCEGIGEIITPLKPFENKILVVLKPNFGVSTKEVYTNLDINKIRKHVNIEGLIQAMENDDLDYVSKNMKNVLENVTLKKHTILKNIKEDMRKSGALGAMMSGSGPTVFAFFDDMLTAQRAFEFLKGKYKYSDVYITRTINSNNL.

K8 is a catalytic residue. 92–102 (PVAAGMAGGST) contacts ATP. D134 is an active-site residue.

Belongs to the GHMP kinase family. IspE subfamily.

It catalyses the reaction 4-CDP-2-C-methyl-D-erythritol + ATP = 4-CDP-2-C-methyl-D-erythritol 2-phosphate + ADP + H(+). The protein operates within isoprenoid biosynthesis; isopentenyl diphosphate biosynthesis via DXP pathway; isopentenyl diphosphate from 1-deoxy-D-xylulose 5-phosphate: step 3/6. Functionally, catalyzes the phosphorylation of the position 2 hydroxy group of 4-diphosphocytidyl-2C-methyl-D-erythritol. The polypeptide is 4-diphosphocytidyl-2-C-methyl-D-erythritol kinase (Clostridium perfringens (strain SM101 / Type A)).